The sequence spans 182 residues: Ribosome maturation factor RimM (182 aa).

Residues 103 to 182 form the PRC barrel domain; sequence EDEFYWRELF…RIEVDWDPGF (80 aa).

The protein belongs to the RimM family. As to quaternary structure, binds ribosomal protein uS19.

It is found in the cytoplasm. Its function is as follows. An accessory protein needed during the final step in the assembly of 30S ribosomal subunit, possibly for assembly of the head region. Essential for efficient processing of 16S rRNA. May be needed both before and after RbfA during the maturation of 16S rRNA. It has affinity for free ribosomal 30S subunits but not for 70S ribosomes. This is Ribosome maturation factor RimM from Vibrio parahaemolyticus serotype O3:K6 (strain RIMD 2210633).